Reading from the N-terminus, the 433-residue chain is Serine hydroxymethyltransferase (433 aa).

(6S)-5,6,7,8-tetrahydrofolate is bound at residue 121 to 123 (AHV). Lys-227 carries the post-translational modification N6-(pyridoxal phosphate)lysine. Glu-243 is a binding site for (6S)-5,6,7,8-tetrahydrofolate.

Belongs to the SHMT family. Homodimer. Requires pyridoxal 5'-phosphate as cofactor.

It is found in the cytoplasm. It carries out the reaction 5,10-methylenetetrahydrosulfopterin + glycine + H2O = tetrahydrosulfopterin + L-serine. The protein operates within amino-acid biosynthesis; glycine biosynthesis; glycine from L-serine: step 1/1. Its activity is regulated as follows. Is completely inhibited by addition of NaCNBH(3) in vitro; this reagent is a known inhibitor of PLP enzymes, that reduces the internal aldimine of PLP to the catalytically inactive and stable secondary amine. Is also inhibited by L-cysteine, which forms a thiazolidine complex with the active site PLP. In terms of biological role, catalyzes the reversible interconversion of serine and glycine with the modified folate sulfopterin serving as the one-carbon carrier. Cannot use tetrahydrofolate (THF or H4PteGlu) as the pteridine substrate. Also exhibits a pteridine-independent aldolase activity toward beta-hydroxyamino acids, producing glycine and aldehydes, via a retro-aldol mechanism. Thus, is able to catalyze the cleavage of both allo-threonine and beta-phenylserine. This is Serine hydroxymethyltransferase from Saccharolobus solfataricus (strain ATCC 35092 / DSM 1617 / JCM 11322 / P2) (Sulfolobus solfataricus).